A 109-amino-acid chain; its full sequence is MFGKGGLGNLMKQAQQMQDRMQKMQEEIAQLEVTGESGAGLVKITINGAHNCRRVEIDPSLMEDDKDMLEDLIAAAFNDAVRRAEELQKEKMASVTAGMALPPGFKMPF.

It belongs to the YbaB/EbfC family. In terms of assembly, homodimer.

It is found in the cytoplasm. Its subcellular location is the nucleoid. Binds to DNA and alters its conformation. May be involved in regulation of gene expression, nucleoid organization and DNA protection. In Pasteurella multocida (strain Pm70), this protein is Nucleoid-associated protein PM0205.